Consider the following 243-residue polypeptide: MLTFLIPTAKEMTTPKESHPHLLPQDSQAILKIMTAMTTEDLAKSYRIKEEAAKKEQQRWQDMASQQSLAYPAYQLFNGLMYRHIKRDKLTTQEQAYLTQQVYITSSFYGIIPANHPIAEHRHDFHTRIKIEGQSLKSYWRPCYNQFAKEHPQVISLLSSEFDDVFSKDCKQLWISPKFMAEKEGQFKTHSTISKKARGAFLTACMENNCQTVDSLKSLVFAGFYYHPDLSTDYEFVYIKKEA.

The protein belongs to the UPF0246 family.

The sequence is that of UPF0246 protein SpyM51747 from Streptococcus pyogenes serotype M5 (strain Manfredo).